The following is a 46-amino-acid chain: Protein PsbN (46 aa).

The chain crosses the membrane as a helical span at residues 7–27 (ALSVAIGVLAVLLGMTGFGVY).

This sequence belongs to the PsbN family.

The protein localises to the cellular thylakoid membrane. May play a role in photosystem I and II biogenesis. This is Protein PsbN from Parasynechococcus marenigrum (strain WH8102).